The chain runs to 153 residues: Cytochrome c-type biogenesis protein CcmE (153 aa).

The Cytoplasmic segment spans residues 1-6 (MNARRR). A helical; Signal-anchor for type II membrane protein membrane pass occupies residues 7-27 (LWSLLMLILAVGTAATLTIMA). Residues 28-153 (LRRNLTYLYM…LDTPIAQTTP (126 aa)) lie on the Periplasmic side of the membrane. Heme-binding residues include His-121 and Tyr-125. Over residues 130–141 (LTNKMQPTPTQH) the composition is skewed to polar residues. The segment at 130–153 (LTNKMQPTPTQHTHLDTPIAQTTP) is disordered.

This sequence belongs to the CcmE/CycJ family.

The protein localises to the cell inner membrane. In terms of biological role, heme chaperone required for the biogenesis of c-type cytochromes. Transiently binds heme delivered by CcmC and transfers the heme to apo-cytochromes in a process facilitated by CcmF and CcmH. This Xylella fastidiosa (strain 9a5c) protein is Cytochrome c-type biogenesis protein CcmE.